The sequence spans 299 residues: MKNTASTTAAAGWRDYYELCKPRVVALMMLTAVVGMLLASDQGMPWNALILGNLGIALLASSAAAINHIVDQKIDAVMARTQKRPIVQGRVDNVHALTFAFSLAVVGMAILAWGVNPLTAWLTLASLIGYAVVYTLFLKRATPQNIVLGGLAGAAPPLLGWTSVTGTVDPHALLLVLIIFAWTPPHFWALAVHRKDEYAKAGVPMLPVTHGDRYTKLHILLYTLMLFAASMLPFITGMCGWIYFVAALALGVRFLDWAWAMWRDSRKHAAIKTFRYSITYLMLLFVALLADHYIPVTLS.

8 helical membrane passes run 24–44 (VVAL…DQGM), 46–66 (WNAL…AAAI), 94–114 (VHAL…LAWG), 118–138 (LTAW…TLFL), 146–166 (IVLG…SVTG), 172–192 (ALLL…ALAV), 232–252 (LPFI…ALGV), and 278–298 (ITYL…PVTL).

This sequence belongs to the UbiA prenyltransferase family. Protoheme IX farnesyltransferase subfamily.

The protein resides in the cell inner membrane. The catalysed reaction is heme b + (2E,6E)-farnesyl diphosphate + H2O = Fe(II)-heme o + diphosphate. The protein operates within porphyrin-containing compound metabolism; heme O biosynthesis; heme O from protoheme: step 1/1. Functionally, converts heme B (protoheme IX) to heme O by substitution of the vinyl group on carbon 2 of heme B porphyrin ring with a hydroxyethyl farnesyl side group. This is Protoheme IX farnesyltransferase from Hahella chejuensis (strain KCTC 2396).